Here is a 588-residue protein sequence, read N- to C-terminus: L-fucose isomerase (588 aa).

Catalysis depends on proton acceptor residues E335 and D359. E335, D359, and H525 together coordinate Mn(2+).

The protein belongs to the L-fucose isomerase family. It depends on Mn(2+) as a cofactor.

It localises to the cytoplasm. It carries out the reaction L-fucose = L-fuculose. It functions in the pathway carbohydrate degradation; L-fucose degradation; L-lactaldehyde and glycerone phosphate from L-fucose: step 1/3. Functionally, converts the aldose L-fucose into the corresponding ketose L-fuculose. This chain is L-fucose isomerase, found in Streptococcus pneumoniae (strain ATCC 700669 / Spain 23F-1).